The following is a 557-amino-acid chain: Aspartate--tRNA ligase (557 aa).

Residue Glu-168 coordinates L-aspartate. The aspartate stretch occupies residues 192-195 (QIYK). Position 214 (Arg-214) interacts with L-aspartate. ATP is bound by residues 214 to 216 (RDE) and Gln-223. His-423 contributes to the L-aspartate binding site. Glu-457 serves as a coordination point for ATP. Position 464 (Arg-464) interacts with L-aspartate. 505-508 (GLDR) is an ATP binding site.

This sequence belongs to the class-II aminoacyl-tRNA synthetase family. Type 1 subfamily. In terms of assembly, homodimer.

The protein localises to the cytoplasm. The catalysed reaction is tRNA(Asp) + L-aspartate + ATP = L-aspartyl-tRNA(Asp) + AMP + diphosphate. Functionally, catalyzes the attachment of L-aspartate to tRNA(Asp) in a two-step reaction: L-aspartate is first activated by ATP to form Asp-AMP and then transferred to the acceptor end of tRNA(Asp). In Mycoplasma pneumoniae (strain ATCC 29342 / M129 / Subtype 1) (Mycoplasmoides pneumoniae), this protein is Aspartate--tRNA ligase.